The primary structure comprises 89 residues: Histone H3.v2 (89 aa).

It belongs to the histone H3 family.

This is Histone H3.v2 (H3v2) from Dictyostelium discoideum (Social amoeba).